Here is a 141-residue protein sequence, read N- to C-terminus: Acetyltransferase YpeA (141 aa).

The 141-residue stretch at 1-141 (MEIRVFRQED…GKRLIEDEEY (141 aa)) folds into the N-acetyltransferase domain.

This sequence belongs to the acetyltransferase family. YpeA subfamily.

This chain is Acetyltransferase YpeA, found in Shigella boydii serotype 4 (strain Sb227).